Consider the following 312-residue polypeptide: Retron Ec83 reverse transcriptase (312 aa).

The Reverse transcriptase domain occupies 14-239 (PDFDVLLKSR…HNRHVTGVTL (226 aa)). Mg(2+) contacts are provided by D97, D185, and D186.

Belongs to the bacterial reverse transcriptase family.

The enzyme catalyses DNA(n) + a 2'-deoxyribonucleoside 5'-triphosphate = DNA(n+1) + diphosphate. Its function is as follows. Reverse transcriptase (RT) component of antiviral defense system retron Ec83, composed of a non-coding RNA (ncRNA), this reverse transcriptase (RT), a probable ATPase and a putative HNH endonuclease. Expression of retron Ec83 confers protection against bacteriophages T2, T4 and T6. At multiplicity of infection (MOI) of 0.02 cultures slow growth when infected with T4 but do not collapse, at MOI 2 cultures enter growth stasis. Responsible for synthesis of msDNA-Ec83 (a linear ssDNA with a 5'-terminal phosphate residue). Unlike most known msDNAs the mature product from the original strain does not have an RNA component. When the ncRNA plus RT are expressed in strain K12 / JM109 only linear DNA is seen in stationary phase cells, but logarithmic phase cells have both a linear and branched msDNA (a branched molecule with RNA linked by a 2',5'-phosphodiester bond to ssDNA, a 'classic' retron). The branched msDNA is probably the precursor for the mature linear msDNA, the precursor is cleaved endonucleolytically by ExoVII (xseA-xseB) leaving the observed mature 5'-phosphate ssDNA terminus. The retron transcript serves as primer (from a conserved internal G residue) and template for the reaction, and codes for the RT. Overexpression of the ncRNA and RT, which leads to increased levels of msDNA, is mutagenic in vivo. This may be due to a mismatch in the msDNA stem which binds and sequesters MutS and/or MutL. The chain is Retron Ec83 reverse transcriptase from Escherichia coli.